The primary structure comprises 300 residues: Actin-related protein 2/3 complex subunit 2-B (300 aa).

The protein belongs to the ARPC2 family. As to quaternary structure, component of the Arp2/3 complex composed of actr2/arp2, actr3/arp3, arpc1 (arpc1a or arpc1b), arpc2, arpc3, arpc4 and arpc5.

Its subcellular location is the cytoplasm. It is found in the cytoskeleton. The protein localises to the cell projection. The protein resides in the nucleus. In terms of biological role, actin-binding component of the Arp2/3 complex, a multiprotein complex that mediates actin polymerization upon stimulation by nucleation-promoting factor (NPF). The Arp2/3 complex mediates the formation of branched actin networks in the cytoplasm, providing the force for cell motility. In addition to its role in the cytoplasmic cytoskeleton, the Arp2/3 complex also promotes actin polymerization in the nucleus, thereby regulating gene transcription and repair of damaged DNA. The Arp2/3 complex promotes homologous recombination (HR) repair in response to DNA damage by promoting nuclear actin polymerization, leading to drive motility of double-strand breaks (DSBs). The sequence is that of Actin-related protein 2/3 complex subunit 2-B (arpc2-b) from Xenopus laevis (African clawed frog).